Here is a 267-residue protein sequence, read N- to C-terminus: Hydroxyethylthiazole kinase (267 aa).

Substrate is bound at residue Met-42. Arg-118 and Ser-164 together coordinate ATP. Ala-191 contributes to the substrate binding site.

Belongs to the Thz kinase family. The cofactor is Mg(2+).

It carries out the reaction 5-(2-hydroxyethyl)-4-methylthiazole + ATP = 4-methyl-5-(2-phosphooxyethyl)-thiazole + ADP + H(+). It participates in cofactor biosynthesis; thiamine diphosphate biosynthesis; 4-methyl-5-(2-phosphoethyl)-thiazole from 5-(2-hydroxyethyl)-4-methylthiazole: step 1/1. In terms of biological role, catalyzes the phosphorylation of the hydroxyl group of 4-methyl-5-beta-hydroxyethylthiazole (THZ). This is Hydroxyethylthiazole kinase from Pasteurella multocida (strain Pm70).